We begin with the raw amino-acid sequence, 61 residues long: Short neurotoxin 1 (61 aa).

4 cysteine pairs are disulfide-bonded: Cys-3–Cys-23, Cys-17–Cys-40, Cys-42–Cys-53, and Cys-54–Cys-59.

This sequence belongs to the three-finger toxin family. Short-chain subfamily. Type I alpha-neurotoxin sub-subfamily. Expressed by the venom gland.

The protein localises to the secreted. In terms of biological role, binds to muscle nicotinic acetylcholine receptor (nAChR) and inhibit acetylcholine from binding to the receptor, thereby impairing neuromuscular transmission. Its function is as follows. Produces peripheral paralysis by blocking neuromuscular transmission at the postsynaptic site. Binds to the muscular nicotinic acetylcholine receptor. The sequence is that of Short neurotoxin 1 from Naja annulifera (Banded Egyptian cobra).